We begin with the raw amino-acid sequence, 216 residues long: MQAKTLHIRHLGNQDYETVWHAMQHYTDNRDENSPDELWLVEHPPVFTQGQAGKAEHILNPGDIPVIQVDRGGQVTYHGPGQLVAYPLLDIKRLKIGVRQLVTHIEQSIVDMLKPYGVQAYAKADAPGVYVDERKVASLGLRIRRGCSFHGLALNVDMDISPFQRINPCGYAGLEMVQCKALGGPNTVNEAGEKLTLTFSQLLGYEHLVHHQGLAE.

The BPL/LPL catalytic domain occupies 32 to 207 (ENSPDELWLV…TFSQLLGYEH (176 aa)). Residues 71–78 (RGGQVTYH), 138–140 (SLG), and 151–153 (GLA) each bind substrate. The active-site Acyl-thioester intermediate is the C169.

The protein belongs to the LipB family.

Its subcellular location is the cytoplasm. The enzyme catalyses octanoyl-[ACP] + L-lysyl-[protein] = N(6)-octanoyl-L-lysyl-[protein] + holo-[ACP] + H(+). It functions in the pathway protein modification; protein lipoylation via endogenous pathway; protein N(6)-(lipoyl)lysine from octanoyl-[acyl-carrier-protein]: step 1/2. Functionally, catalyzes the transfer of endogenously produced octanoic acid from octanoyl-acyl-carrier-protein onto the lipoyl domains of lipoate-dependent enzymes. Lipoyl-ACP can also act as a substrate although octanoyl-ACP is likely to be the physiological substrate. The sequence is that of Octanoyltransferase from Shewanella amazonensis (strain ATCC BAA-1098 / SB2B).